The chain runs to 61 residues: Short neurotoxin 1 (61 aa).

4 disulfide bridges follow: Cys3-Cys23, Cys17-Cys40, Cys42-Cys53, and Cys54-Cys59.

This sequence belongs to the three-finger toxin family. Short-chain subfamily. Type I alpha-neurotoxin sub-subfamily. As to expression, expressed by the venom gland.

It localises to the secreted. Its function is as follows. Binds with high affinity to muscular nicotinic acetylcholine receptors (nAChRs) (tested on Torpedo marmorata AChR, Kd=0.07 nM) and with low affinity to neuronal alpha-7/CHRNA7 nAChRs (tested on chimeric receptor, Kd=3 uM) and inhibit acetylcholine from binding to the receptor, thereby impairing neuromuscular transmission. Produces peripheral paralysis by blocking neuromuscular transmission at the postsynaptic site. This Naja pallida (Red spitting cobra) protein is Short neurotoxin 1.